A 342-amino-acid chain; its full sequence is Manganese-dependent ADP-ribose/CDP-alcohol diphosphatase (342 aa).

Residues Asp18, Gln20, Asp67, Asn103, His239, His276, and His278 each contribute to the Zn(2+) site.

This sequence belongs to the ADPRibase-Mn family. In terms of assembly, monomer. The cofactor is Mg(2+).

The enzyme catalyses CDP-choline + H2O = phosphocholine + CMP + 2 H(+). It catalyses the reaction ADP-D-ribose + H2O = D-ribose 5-phosphate + AMP + 2 H(+). The catalysed reaction is CDP-glycerol + H2O = sn-glycerol 3-phosphate + CMP + 2 H(+). Hydrolyzes ADP-ribose, IDP-ribose, CDP-glycerol, CDP-choline and CDP-ethanolamine, but not other non-reducing ADP-sugars or CDP-glucose. This is Manganese-dependent ADP-ribose/CDP-alcohol diphosphatase (adprm) from Xenopus tropicalis (Western clawed frog).